We begin with the raw amino-acid sequence, 65 residues long: KKDGYLVDKTGCKYTCWKLGENKYCNRECTWKHRGGNYGYCYGFGCYCEGLADSTQTWPLPNKSC.

Positions 2 to 65 (KDGYLVDKTG…QTWPLPNKSC (64 aa)) constitute an LCN-type CS-alpha/beta domain. Cystine bridges form between Cys12-Cys65, Cys16-Cys41, Cys25-Cys46, and Cys29-Cys48.

Belongs to the long (4 C-C) scorpion toxin superfamily. Sodium channel inhibitor family. Beta subfamily. As to expression, expressed by the venom gland.

The protein resides in the secreted. Functionally, a probable toxin that has no activity on the tested sodium channels (when tested at 200 nM) and is not toxic to mice, crickets or sweet water shrimps. It resembles Beta toxins that bind voltage-independently at site-4 of sodium channels and shift the voltage of activation toward more negative potentials, thereby affecting sodium channel activation and promoting spontaneous and repetitive firing. This chain is Toxin Cbo5, found in Centruroides bonito (Scorpion).